Consider the following 173-residue polypeptide: Lithostathine-2 (173 aa).

The first 22 residues, 1–22 (MAQNNVYLILFLCLMFLSYSQG), serve as a signal peptide directing secretion. The C-type lectin domain occupies 41 to 171 (INCPEGANAY…EAQYSFVCKF (131 aa)). Disulfide bonds link cysteine 43/cysteine 54, cysteine 71/cysteine 169, and cysteine 144/cysteine 161.

As to expression, expressed only in regenerating islets and normal exocrine pancreas, but not in normal pancreatic islets. Expressed strongly in pancreas, weakly in liver, but not at all in gall bladder.

The protein resides in the secreted. In terms of biological role, might act as an inhibitor of spontaneous calcium carbonate precipitation. This is Lithostathine-2 (Reg2) from Mus musculus (Mouse).